We begin with the raw amino-acid sequence, 502 residues long: ATP synthase subunit alpha (502 aa).

An ATP-binding site is contributed by 169-176; the sequence is GDRQTGKT.

It belongs to the ATPase alpha/beta chains family. In terms of assembly, F-type ATPases have 2 components, CF(1) - the catalytic core - and CF(0) - the membrane proton channel. CF(1) has five subunits: alpha(3), beta(3), gamma(1), delta(1), epsilon(1). CF(0) has three main subunits: a(1), b(2) and c(9-12). The alpha and beta chains form an alternating ring which encloses part of the gamma chain. CF(1) is attached to CF(0) by a central stalk formed by the gamma and epsilon chains, while a peripheral stalk is formed by the delta and b chains.

The protein resides in the cell membrane. It catalyses the reaction ATP + H2O + 4 H(+)(in) = ADP + phosphate + 5 H(+)(out). Produces ATP from ADP in the presence of a proton gradient across the membrane. The alpha chain is a regulatory subunit. This chain is ATP synthase subunit alpha, found in Streptococcus pyogenes serotype M12 (strain MGAS9429).